The chain runs to 203 residues: Guanylate kinase (203 aa).

One can recognise a Guanylate kinase-like domain in the interval Gly-5–Val-183. Residue Ala-12–Thr-19 coordinates ATP.

The protein belongs to the guanylate kinase family.

Its subcellular location is the cytoplasm. It catalyses the reaction GMP + ATP = GDP + ADP. In terms of biological role, essential for recycling GMP and indirectly, cGMP. The protein is Guanylate kinase of Geobacter metallireducens (strain ATCC 53774 / DSM 7210 / GS-15).